A 339-amino-acid chain; its full sequence is uncharacterized protein (339 aa).

2 VOC domains span residues Glu-2–Glu-127 and Thr-141–Ile-276. 3 residues coordinate Fe cation: His-144, His-222, and Glu-306.

It belongs to the 4HPPD family. Fe cation serves as cofactor.

This is an uncharacterized protein from Synechocystis sp. (strain ATCC 27184 / PCC 6803 / Kazusa).